The sequence spans 689 residues: Glycine--tRNA ligase beta subunit (689 aa).

The protein belongs to the class-II aminoacyl-tRNA synthetase family. In terms of assembly, tetramer of two alpha and two beta subunits.

It is found in the cytoplasm. It carries out the reaction tRNA(Gly) + glycine + ATP = glycyl-tRNA(Gly) + AMP + diphosphate. The polypeptide is Glycine--tRNA ligase beta subunit (Acinetobacter baylyi (strain ATCC 33305 / BD413 / ADP1)).